The chain runs to 429 residues: Ribosomal RNA small subunit methyltransferase B (429 aa).

S-adenosyl-L-methionine contacts are provided by residues 254–260 (CAAPGGK), Asp277, Asp303, and Asp322. Cys375 acts as the Nucleophile in catalysis. Residues 397–419 (ALSETGTPDQPGQQNLPGGEEGD) are disordered. Polar residues predominate over residues 400-412 (ETGTPDQPGQQNL).

The protein belongs to the class I-like SAM-binding methyltransferase superfamily. RsmB/NOP family.

The protein resides in the cytoplasm. It catalyses the reaction cytidine(967) in 16S rRNA + S-adenosyl-L-methionine = 5-methylcytidine(967) in 16S rRNA + S-adenosyl-L-homocysteine + H(+). Its function is as follows. Specifically methylates the cytosine at position 967 (m5C967) of 16S rRNA. The protein is Ribosomal RNA small subunit methyltransferase B of Salmonella enteritidis PT4 (strain P125109).